A 498-amino-acid polypeptide reads, in one-letter code: L-amino acid oxidase (498 aa).

The N-terminal stretch at 1–11 (SLLFLAAVGSC) is a signal peptide. Cys21 and Cys184 are disulfide-bonded. FAD is bound by residues 54-55 (MS), 74-75 (EA), 74-78 (EASER), Arg82, and 98-101 (GPMR). Arg101 is a substrate binding site. Asn183 carries an N-linked (GlcNAc...) asparagine glycan. Substrate is bound at residue His234. FAD is bound at residue Val272. An intrachain disulfide couples Cys342 to Cys423. Tyr383 contacts substrate. FAD contacts are provided by residues Glu468, 475-480 (GWIDST), and 476-480 (WIDST). 475–476 (GW) serves as a coordination point for substrate.

Belongs to the flavin monoamine oxidase family. FIG1 subfamily. As to quaternary structure, homodimer; non-covalently linked. The cofactor is FAD. Post-translationally, N-glycosylated. Contains 18.73% carbohydrates. As to expression, expressed by the venom gland.

The protein resides in the secreted. The enzyme catalyses an L-alpha-amino acid + O2 + H2O = a 2-oxocarboxylate + H2O2 + NH4(+). The catalysed reaction is L-leucine + O2 + H2O = 4-methyl-2-oxopentanoate + H2O2 + NH4(+). With respect to regulation, strongly inhibited by glutathione, and moderately inhibited by PMSF, acetate iodine and glutamic acid. Is also inhibited by Zn(2+) ions, but not by Ca(2+), Mg(2+) and Mn(2+). Catalyzes an oxidative deamination of predominantly hydrophobic and aromatic L-amino acids, thus producing hydrogen peroxide that may contribute to the diverse toxic effects of this enzyme. This enzyme shows activity on L-Leu. This enzyme inhibits platelet aggregation in human platelet rich plasma induced by ADP (IC(50)=3.2 mg/mL), and shows antibacterial activities on both Gram-positive and Gram-negative bacteria (P.aeruginosa, V.cholerae, S.aureus, E.faecalis and E.coli). These two effects are due to hydrogen peroxide, since they are inhibited by catalase. It also induces edema in mouse paw pads but does not show hemolytic activity. This protein may also have activities in hemorrhage, and apoptosis. The protein is L-amino acid oxidase of Bothrops pictus (Desert lancehead).